We begin with the raw amino-acid sequence, 317 residues long: L-lactate dehydrogenase (317 aa).

NAD(+) is bound by residues valine 16, aspartate 37, lysine 42, tyrosine 68, and 82–83 (GA). Positions 85 and 91 each coordinate substrate. NAD(+)-binding positions include threonine 104, 121–123 (ATN), and serine 146. 123-126 (NPVD) is a binding site for substrate. Position 151–154 (151–154 (DTAR)) interacts with substrate. Beta-D-fructose 1,6-bisphosphate is bound by residues arginine 156 and histidine 171. Histidine 178 acts as the Proton acceptor in catalysis. Position 222 is a phosphotyrosine (tyrosine 222). Threonine 231 serves as a coordination point for substrate.

It belongs to the LDH/MDH superfamily. LDH family. In terms of assembly, homotetramer.

The protein resides in the cytoplasm. It catalyses the reaction (S)-lactate + NAD(+) = pyruvate + NADH + H(+). The protein operates within fermentation; pyruvate fermentation to lactate; (S)-lactate from pyruvate: step 1/1. Allosterically activated by fructose 1,6-bisphosphate (FBP). Catalyzes the conversion of lactate to pyruvate. The sequence is that of L-lactate dehydrogenase from Corynebacterium efficiens (strain DSM 44549 / YS-314 / AJ 12310 / JCM 11189 / NBRC 100395).